An 83-amino-acid chain; its full sequence is Short neurotoxin OKI-Ed (83 aa).

An N-terminal signal peptide occupies residues Met-1 to Thr-21. 4 disulfide bridges follow: Cys-24/Cys-45, Cys-38/Cys-62, Cys-64/Cys-75, and Cys-76/Cys-81.

Belongs to the three-finger toxin family. Short-chain subfamily. Type I alpha-neurotoxin sub-subfamily. Expressed by the venom gland.

Its subcellular location is the secreted. In terms of biological role, binds to muscle nicotinic acetylcholine receptor (nAChR) and inhibit acetylcholine from binding to the receptor, thereby impairing neuromuscular transmission. The protein is Short neurotoxin OKI-Ed of Laticauda semifasciata (Black-banded sea krait).